Reading from the N-terminus, the 146-residue chain is Ribosome maturation factor RimP (146 aa).

Belongs to the RimP family.

It localises to the cytoplasm. Required for maturation of 30S ribosomal subunits. This is Ribosome maturation factor RimP from Helicobacter pylori (strain P12).